Reading from the N-terminus, the 213-residue chain is Orotate phosphoribosyltransferase (213 aa).

Residue K26 coordinates 5-phospho-alpha-D-ribose 1-diphosphate. 34-35 lines the orotate pocket; sequence FF. Residues 72–73, R99, K100, K103, H105, and 124–132 each bind 5-phospho-alpha-D-ribose 1-diphosphate; these read YK and DDVITAGTA. The orotate site is built by T128 and R156.

The protein belongs to the purine/pyrimidine phosphoribosyltransferase family. PyrE subfamily. In terms of assembly, homodimer. It depends on Mg(2+) as a cofactor.

The enzyme catalyses orotidine 5'-phosphate + diphosphate = orotate + 5-phospho-alpha-D-ribose 1-diphosphate. It participates in pyrimidine metabolism; UMP biosynthesis via de novo pathway; UMP from orotate: step 1/2. Functionally, catalyzes the transfer of a ribosyl phosphate group from 5-phosphoribose 1-diphosphate to orotate, leading to the formation of orotidine monophosphate (OMP). This is Orotate phosphoribosyltransferase from Pseudomonas syringae pv. syringae (strain B728a).